The primary structure comprises 293 residues: Ribosomal protein L11 methyltransferase (293 aa).

Thr-145, Gly-166, Asp-188, and Asn-230 together coordinate S-adenosyl-L-methionine.

It belongs to the methyltransferase superfamily. PrmA family.

Its subcellular location is the cytoplasm. It catalyses the reaction L-lysyl-[protein] + 3 S-adenosyl-L-methionine = N(6),N(6),N(6)-trimethyl-L-lysyl-[protein] + 3 S-adenosyl-L-homocysteine + 3 H(+). Functionally, methylates ribosomal protein L11. The chain is Ribosomal protein L11 methyltransferase from Actinobacillus pleuropneumoniae serotype 3 (strain JL03).